Here is a 199-residue protein sequence, read N- to C-terminus: FMN-dependent NADH:quinone oxidoreductase (199 aa).

Residues 17–19 and 87–90 each bind FMN; these read SNS and MYNF.

This sequence belongs to the azoreductase type 1 family. Homodimer. The cofactor is FMN.

It carries out the reaction 2 a quinone + NADH + H(+) = 2 a 1,4-benzosemiquinone + NAD(+). It catalyses the reaction N,N-dimethyl-1,4-phenylenediamine + anthranilate + 2 NAD(+) = 2-(4-dimethylaminophenyl)diazenylbenzoate + 2 NADH + 2 H(+). Its function is as follows. Quinone reductase that provides resistance to thiol-specific stress caused by electrophilic quinones. Functionally, also exhibits azoreductase activity. Catalyzes the reductive cleavage of the azo bond in aromatic azo compounds to the corresponding amines. This chain is FMN-dependent NADH:quinone oxidoreductase, found in Mycoplasma mycoides subsp. mycoides SC (strain CCUG 32753 / NCTC 10114 / PG1).